Consider the following 159-residue polypeptide: Transcription elongation factor GreA (159 aa).

The stretch at 14 to 76 forms a coiled coil; it reads VKKLEEELEY…QLENMLRNAN (63 aa).

It belongs to the GreA/GreB family.

Functionally, necessary for efficient RNA polymerase transcription elongation past template-encoded arresting sites. The arresting sites in DNA have the property of trapping a certain fraction of elongating RNA polymerases that pass through, resulting in locked ternary complexes. Cleavage of the nascent transcript by cleavage factors such as GreA or GreB allows the resumption of elongation from the new 3'terminus. GreA releases sequences of 2 to 3 nucleotides. The protein is Transcription elongation factor GreA of Clostridium novyi (strain NT).